Reading from the N-terminus, the 243-residue chain is Juxtaposed with another zinc finger protein 1 (243 aa).

The segment at 12 to 37 (NTCRFGGCGLHFPTLADLIEHIEDNH) adopts a C2H2-type 1 zinc-finger fold. The tract at residues 39 to 79 (DTDPRVLEKQELQQPTYVALSYINRFMTDAARREQESLKKK) is required for interaction with NR2C2. The segment covering 89–108 (SSSVSRGNVSTPPRHSSGSL) has biased composition (polar residues). Residues 89–151 (SSSVSRGNVS…SDSDESWTTE (63 aa)) form a disordered region. Threonine 109 and threonine 113 each carry phosphothreonine. A compositionally biased stretch (low complexity) spans 118–130 (PSSSFRSSTPTGS). Residues 131 to 148 (EYDEEEVDYEESDSDESW) are compositionally biased toward acidic residues. The C2H2-type 2 zinc-finger motif lies at 173–198 (FACPVPGCKKRYKNVNGIKYHAKNGH). The C2H2-type 3; degenerate zinc-finger motif lies at 208-230 (FKCRCGKSYKTAQGLRHHTINFH).

Interacts with NR2C2 (via ligand-binding region). In terms of tissue distribution, expressed in range of tissues with highest expression levels in testis, liver, muscle and fat and lowest levels in kidney. Detected in liver and white adipose tissue (at protein level).

It localises to the nucleus. In terms of biological role, acts as a transcriptional corepressor of orphan nuclear receptor NR2C2. Inhibits expression of the gluconeogenesis enzyme PCK2 through inhibition of NR2C2 activity. Also involved in transcriptional activation of NAMPT by promoting expression of PPARA and PPARD. Plays a role in lipid metabolism by suppressing lipogenesis, increasing lipolysis and decreasing lipid accumulation in adipose tissue. Plays a role in glucose homeostasis by improving glucose metabolism and insulin sensitivity. The protein is Juxtaposed with another zinc finger protein 1 (Jazf1) of Mus musculus (Mouse).